Here is a 1630-residue protein sequence, read N- to C-terminus: MDVETQEIRQARQRASVKWLLSKAFNNRVPDNLKEPFYRDHENQERLKPQIIVELGNATLYCQTLANLYSDPNYQSMNHWSIIQTLARKGVPVAESADMPITETVLIQTNPLRINAHMSVIESLMVLYAKEISSGDRVMAAIRRISGNNYQAPTGQSYEQALLGWISHACAALKKRIIKEVDAGLPDDNGSRLQTPDIPPVRDFQDLCDGICLALLISYYCPKVVPWTSVRINYLPAVEDSIHNILLVCNFSQKHLPYTVMHMTPEDVTYMRGSMKLNLVVLLTDLFNLFEIHPAKCVCYPGMDGQVPHSNSFGGGLNRRSTPPNEYQTVQSNNFDGNHAEAFVVHKSRGITTLASMHSQQQQQLHQQQQHQQQYHQQPLQQHPSQSQLQIQQQEPLVPARLRQAKEKTNVESKADERGRRSRRNSSSEDSQLTIENFGGSQDQLNTLGRYERDRERKLSNTSVGSYPVEPAVAVRSSIADARGTLQLGYDTDSGSEKQDRETEKYSMRRQVSVDNVPTVSSHNLSNAGSPLPVARHKQHSSDKDYSSNSGMTPDAYNDSRSTSGYDPESTPVRKSSTSSMPASPAAWQLDVGDDDMRSLENASKLSTIRMKLEEKRRRIEQDKRKIEMALLRHQEKEDLESCPDVMKWETMSNESKRTPDMDPVDLDKYQQSIAIMNMNLQDIQQDIHRLATQQSQMQAQHLQAQQLMQAQQIANMLNQAYNAPVSAYSSRPPSRDPYQQQLHHQQQQPMPMPQPMQYVNEHGQYMSPPQPAHYMPQQAQQPQSIYSDNGAAYNHSNHSPYGGTPQYRSSVVYDDYGQPTNHFYLHESSPQPQAHQHPQRRTWAHSAAAAAYEQQQQIQPSLVDVNAWQTQQHQKQKQTWMNRPPSSAGAPSPGSFMLHQNGGGGGGGGGGGELQHLFQVQASPQHGQRQVSGSNGVQRQQSLTNLRDNRSPKAPQNMGMPMGMPMQQEDMMAPQSICFIGDEEDVDELERNIIESMQSTHISDFVHQQQQQHQHQQQLQQQQRLQGHSGRGSSSEDYDSGEMISNKLNITSGNLTYRIPSPSRPSIQANSFQDPRAMAAASGGEDQPPEKGFYISFDDEQPKRPKPPLRAKRSPKKESPPGSRDSVDNQATLKRESLSHLHNNNNIGFGNDDVNSKPVTRHSIHGLNNSNSVKSPGNATYNKYTDEPPIQLRQLAVSGAMSPTSNERHHLDDVSNQSPQQTQQPMSPTRLQQSSNNAEAAKNKALVIGADSTNLDPESVDEMERRKEKIMLLSLQRRQQQEEAKARKEIEASQKREKEREKEEERARKKEEQMARRAAILEQHRLKKAIEEAEREGKTLDRPDLHVKLQSHSSTSTTPRLRQQRTTRPRPKTIHVDDASVDISEASSISSRGKKGSSSNLTGYGQLSSNSMKRDYYRGSQDSLTVKESPDDYPSTSSTPIGRRGSYKTSREPAGVERGRTLSRISVAKGSTLNFRGRKSNSLMNLCGPKLYKQPAAKSNRGIILNAVEYCVFPGVVNREAKQKVLEKIARSEAKHFLVLFRDAGCQFRALYSYQPETDQVTKLYGTGPSQVEEVMFDKFFKYNSGGKCFSQVHTKHLTVTIDAFTIHNSLWQGKRVQLPSKKDMALVI.

The Calponin-homology (CH) domain occupies 156–288 (QSYEQALLGW…LVVLLTDLFN (133 aa)). Disordered stretches follow at residues 311–333 (NSFG…VQSN) and 355–446 (ASMH…DQLN). Residues 319 to 333 (RRSTPPNEYQTVQSN) are compositionally biased toward polar residues. T322 is subject to Phosphothreonine. A compositionally biased stretch (low complexity) spans 358-394 (HSQQQQQLHQQQQHQQQYHQQPLQQHPSQSQLQIQQQ). Residues 404–419 (QAKEKTNVESKADERG) are compositionally biased toward basic and acidic residues. Phosphoserine is present on residues S422, S431, S441, S460, S463, and S466. A compositionally biased stretch (polar residues) spans 432–446 (QLTIENFGGSQDQLN). The disordered stretch occupies residues 486 to 589 (LQLGYDTDSG…SMPASPAAWQ (104 aa)). T492 bears the Phosphothreonine mark. Phosphoserine occurs at positions 494, 496, 513, and 530. Residues 495 to 507 (GSEKQDRETEKYS) show a composition bias toward basic and acidic residues. Residues 513 to 529 (SVDNVPTVSSHNLSNAG) show a composition bias toward polar residues. Positions 576 to 587 (SSTSSMPASPAA) are enriched in low complexity. Residues 601–639 (ENASKLSTIRMKLEEKRRRIEQDKRKIEMALLRHQEKED) are a coiled coil. Disordered regions lie at residues 726-753 (VSAY…PMPM), 872-967 (QQHQ…GMPM), 1005-1042 (DFVH…YDSG), 1055-1186 (NLTY…NKYT), 1200-1241 (GAMS…NAEA), 1284-1315 (EAKA…EEQM), and 1335-1459 (EREG…GVER). Low complexity-rich tracts occupy residues 738-750 (PYQQ…QQQP) and 872-896 (QQHQ…SPGS). Residues 902 to 914 (NGGGGGGGGGGGE) are compositionally biased toward gly residues. Residues 919–947 (FQVQASPQHGQRQVSGSNGVQRQQSLTNL) show a composition bias toward polar residues. Composition is skewed to low complexity over residues 956 to 967 (PQNMGMPMGMPM) and 1008 to 1036 (HQQQ…GSSS). Phosphoserine is present on residues S1034, S1035, S1036, and S1067. The span at 1065-1074 (RPSIQANSFQ) shows a compositional bias: polar residues. Residues 1105 to 1116 (RPKPPLRAKRSP) show a composition bias toward basic residues. Positions 1167 to 1184 (GLNNSNSVKSPGNATYNK) are enriched in polar residues. Low complexity predominate over residues 1218-1230 (QSPQQTQQPMSPT). S1219 and S1228 each carry phosphoserine. The stretch at 1277 to 1343 (QRRQQQEEAK…AEREGKTLDR (67 aa)) forms a coiled coil. The span at 1335–1348 (EREGKTLDRPDLHV) shows a compositional bias: basic and acidic residues. Over residues 1363 to 1374 (RQQRTTRPRPKT) the composition is skewed to basic residues. Over residues 1382 to 1400 (VDISEASSISSRGKKGSSS) the composition is skewed to low complexity. A phosphoserine mark is found at S1398, S1399, and S1400. The segment covering 1401–1412 (NLTGYGQLSSNS) has biased composition (polar residues). Positions 1450-1459 (TSREPAGVER) are enriched in basic and acidic residues. The CKK domain maps to 1489 to 1623 (GPKLYKQPAA…QGKRVQLPSK (135 aa)).

This sequence belongs to the CAMSAP1 family. As to quaternary structure, interacts with msps. Associates with the minus end of the microtubules.

It localises to the cytoplasm. The protein resides in the cytoskeleton. Its subcellular location is the microtubule organizing center. The protein localises to the spindle pole body. It is found in the centrosome. It localises to the perinuclear region. Its function is as follows. Key microtubule-organizing protein that specifically binds the minus-end of microtubules and regulates their dynamics and organization. Involved in mitotic spindle assembly. Regulates microtubule (MT) severing. Antagonizes the activity of the kinesin-13 depolymerase Klp10A thereby switching off the depolymerization of the MTs at their pole-associated minus ends, which turns off poleward flux and induces anaphase B spindle elongation. Involved in asymmetric cell division of sensory organ precursor (SOP) cells by playing a role in the asymmetric localization of Sara-expressing endosomes to the pIIa daughter cell but not to the pIIb cell. Klp98A targets Sara-expressing endosomes to the central spindle which is symmetrically arranged in early cell division. During late cytokinesis, central spindle asymmetry is generated by enrichment of Patronin on the pIIb side which protects microtubules from depolymerization by Klp10A while unprotected microtubules on the pIIa side are disassembled by Klp10A, leading to the asymmetric delivery of Sara-expressing endosomes to the pIIa daughter cell. In fat body cells, part of perinuclear non-centrosomal microtubule-organizing centers (ncMTOCs) which function to accommodate the organization of microtubule (MT) networks to control nuclear positioning and dynein motor-based retrograde endosomal trafficking. Within the ncMTOC, Msp300 and shot anchors the ncMTOC at the nuclear surface and recruits the MT minus-end regulators Patronin and Nin for assembly, anchoring and/or stabilization of circumferential and radial MTs at the ncMTOCs. This protein, and perhaps Nin, recruits msps to the ncMTOC for the gamma-tubulin-independent elongation of radial MTs. This is Patronin (Patronin) from Drosophila melanogaster (Fruit fly).